Consider the following 635-residue polypeptide: Extracellular metalloproteinase mep (635 aa).

The N-terminal stretch at 1–19 (MMRGLLLAGALGLPLAVLA) is a signal peptide. A propeptide spanning residues 20–246 (HPTHHAHGLQ…VHGVVDYVAE (227 aa)) is cleaved from the precursor. An N-linked (GlcNAc...) asparagine glycan is attached at asparagine 287. Positions 290 to 309 (TTRGNNGIAQSNPTGGSQYL) are enriched in polar residues. Residues 290–311 (TTRGNNGIAQSNPTGGSQYLKN) are disordered. Position 430 (histidine 430) interacts with Zn(2+). Glutamate 431 is an active-site residue. A Zn(2+)-binding site is contributed by histidine 434.

Belongs to the peptidase M36 family. Requires Zn(2+) as cofactor.

It localises to the secreted. In terms of biological role, secreted metalloproteinase that allows assimilation of proteinaceous substrates. This chain is Extracellular metalloproteinase mep (mep), found in Aspergillus flavus (strain ATCC 200026 / FGSC A1120 / IAM 13836 / NRRL 3357 / JCM 12722 / SRRC 167).